Here is a 1337-residue protein sequence, read N- to C-terminus: DNA-directed RNA polymerase subunit beta' (1337 aa).

4 residues coordinate Zn(2+): Cys60, Cys62, Cys75, and Cys78. The Mg(2+) site is built by Asp536, Asp538, and Asp540. Zn(2+) contacts are provided by Cys895, Cys974, Cys981, and Cys984.

Belongs to the RNA polymerase beta' chain family. As to quaternary structure, the RNAP catalytic core consists of 2 alpha, 1 beta, 1 beta' and 1 omega subunit. When a sigma factor is associated with the core the holoenzyme is formed, which can initiate transcription. Mg(2+) is required as a cofactor. It depends on Zn(2+) as a cofactor.

The catalysed reaction is RNA(n) + a ribonucleoside 5'-triphosphate = RNA(n+1) + diphosphate. Functionally, DNA-dependent RNA polymerase catalyzes the transcription of DNA into RNA using the four ribonucleoside triphosphates as substrates. The chain is DNA-directed RNA polymerase subunit beta' from Bifidobacterium adolescentis (strain ATCC 15703 / DSM 20083 / NCTC 11814 / E194a).